The sequence spans 212 residues: Nuclear transcription factor Y subunit C-7 (212 aa).

Residues 1–10 are compositionally biased toward polar residues; sequence MEENNGNNNH. Disordered stretches follow at residues 1–23 and 190–212; these read MEEN…LPPP and EWPA…SGGN.

The protein belongs to the NFYC/HAP5 subunit family. In terms of assembly, heterotrimeric transcription factor composed of three components, NF-YA, NF-YB and NF-YC. NF-YB and NF-YC must interact and dimerize for NF-YA association and DNA binding. As to expression, expressed in flowers.

It is found in the nucleus. In terms of biological role, stimulates the transcription of various genes by recognizing and binding to a CCAAT motif in promoters. This is Nuclear transcription factor Y subunit C-7 (NFYC7) from Arabidopsis thaliana (Mouse-ear cress).